Here is a 279-residue protein sequence, read N- to C-terminus: Four and a half LIM domains protein 2 (279 aa).

The segment at 7–31 adopts a C4-type zinc-finger fold; that stretch reads CHHCNESLYGKKYILKEENPHCVAC. 3 LIM zinc-binding domains span residues 40–92, 101–153, and 162–212; these read CEEC…CTDC, CQEC…CVPC, and CVQC…CLTC. Residue Lys-78 forms a Glycyl lysine isopeptide (Lys-Gly) (interchain with G-Cter in SUMO2) linkage. Glycyl lysine isopeptide (Lys-Gly) (interchain with G-Cter in SUMO2) cross-links involve residues Lys-167 and Lys-220. The region spanning 221 to 275 is the LIM zinc-binding 4 domain; that stretch reads CAGCTNPISGLGGTKYISFEERQWHNDCFNCKKCSLSLVGRGFLTERDDILCPDC. At Ser-238 the chain carries Phosphoserine.

Interacts with ZNF638 and TTN/titin. Interacts with E4F1. Interacts with GRB7. Interacts with SIRT1 and FOXO1. Interacts with CEFIP. Interacts with calcineurin. Interacts with FOXK1. As to expression, highly expressed in heart but also detectable in brain and skeletal muscle.

It localises to the cytoplasm. The protein resides in the nucleus. Its subcellular location is the myofibril. The protein localises to the sarcomere. It is found in the z line. Its function is as follows. May function as a molecular transmitter linking various signaling pathways to transcriptional regulation. Negatively regulates the transcriptional repressor E4F1 and may function in cell growth. Inhibits the transcriptional activity of FOXO1 and its apoptotic function by enhancing the interaction of FOXO1 with SIRT1 and FOXO1 deacetylation. Negatively regulates the calcineurin/NFAT signaling pathway in cardiomyocytes. This is Four and a half LIM domains protein 2 (Fhl2) from Mus musculus (Mouse).